Reading from the N-terminus, the 192-residue chain is Density-regulated protein homolog (192 aa).

The disordered stretch occupies residues 62–116 (GLEISDEPAADGDEKKKQKRGGKGSKTGAAAAQAAASGGKKKGGGPQKVTLQREP). Low complexity predominate over residues 87–99 (KTGAAAAQAAASG). Positions 117–176 (RGKKSVTVIKGLATFDIDLKVASKLFAQKFACGSSVTGADEIVIQGDVKDDLLDLIPEKW) constitute an SUI1 domain.

Belongs to the DENR family.

In Caenorhabditis elegans, this protein is Density-regulated protein homolog.